Here is a 287-residue protein sequence, read N- to C-terminus: Probable WRKY transcription factor 57 (287 aa).

A compositionally biased stretch (low complexity) spans 86 to 99 (TSTNNNPSATSSSS). The interval 86 to 137 (TSTNNNPSATSSSSEDPAENSTASAEKTPPPETPVKEKKKAQKRIRQPRFAF) is disordered. Over residues 122 to 132 (EKKKAQKRIRQ) the composition is skewed to basic residues. A DNA-binding region (WRKY) is located at residues 141–206 (SDVDNLEDGY…YEGQHCHQTI (66 aa)). Residues 248-287 (DNNAPSPRLPRPTTEDTPAVSTPSEEGLLGDIVPQTMRNP) are disordered. The segment covering 262–271 (EDTPAVSTPS) has biased composition (polar residues).

Belongs to the WRKY group II-c family.

It localises to the nucleus. Functionally, transcription factor. Interacts specifically with the W box (5'-(T)TGAC[CT]-3'), a frequently occurring elicitor-responsive cis-acting element. The protein is Probable WRKY transcription factor 57 (WRKY57) of Arabidopsis thaliana (Mouse-ear cress).